The following is a 220-amino-acid chain: Iron-sulfur flavoprotein AF_1436 (220 aa).

Residues Cys47, Cys50, Cys53, and Cys59 each coordinate [4Fe-4S] cluster.

This sequence belongs to the SsuE family. Isf subfamily. In terms of assembly, homodimer. The cofactor is FMN. Requires [4Fe-4S] cluster as cofactor.

Functionally, redox-active protein probably involved in electron transport. This chain is Iron-sulfur flavoprotein AF_1436, found in Archaeoglobus fulgidus (strain ATCC 49558 / DSM 4304 / JCM 9628 / NBRC 100126 / VC-16).